A 494-amino-acid chain; its full sequence is Cobyric acid synthase (494 aa).

Positions 249–443 (EINVTILRLP…LHGIFDNGAW (195 aa)) constitute a GATase cobBQ-type domain. Residue C330 is the Nucleophile of the active site. The active site involves H435.

It belongs to the CobB/CobQ family. CobQ subfamily.

It participates in cofactor biosynthesis; adenosylcobalamin biosynthesis. In terms of biological role, catalyzes amidations at positions B, D, E, and G on adenosylcobyrinic A,C-diamide. NH(2) groups are provided by glutamine, and one molecule of ATP is hydrogenolyzed for each amidation. The sequence is that of Cobyric acid synthase from Crocosphaera subtropica (strain ATCC 51142 / BH68) (Cyanothece sp. (strain ATCC 51142)).